Reading from the N-terminus, the 389-residue chain is Phosphoglycerate kinase (389 aa).

Substrate contacts are provided by residues 21–23 (DLN), R36, 59–62 (HLGR), R112, and R145. Residues K196, E313, and 342–345 (GGDT) each bind ATP.

It belongs to the phosphoglycerate kinase family. As to quaternary structure, monomer.

It is found in the cytoplasm. It carries out the reaction (2R)-3-phosphoglycerate + ATP = (2R)-3-phospho-glyceroyl phosphate + ADP. It functions in the pathway carbohydrate degradation; glycolysis; pyruvate from D-glyceraldehyde 3-phosphate: step 2/5. The protein is Phosphoglycerate kinase of Mannheimia succiniciproducens (strain KCTC 0769BP / MBEL55E).